The following is a 228-amino-acid chain: Tungstate uptake system permease protein TupB (228 aa).

Transmembrane regions (helical) follow at residues 25–45, 65–85, 102–122, 144–164, and 203–223; these read IIFL…AVSI, VLYS…AIGL, AMII…TYSL, VIIL…VTTF, and MAIA…AVIY. One can recognise an ABC transmembrane type-1 domain in the interval 26–222; the sequence is IFLSVFVSST…MISFAINAVI (197 aa).

This sequence belongs to the binding-protein-dependent transport system permease family. As to quaternary structure, the complex is composed of two ATP-binding proteins (TupC), two transmembrane proteins (TupB) and a solute-binding protein (TupA).

The protein resides in the cell membrane. In terms of biological role, part of an ABC transporter complex involved in tungstate uptake. Probably responsible for the translocation of the substrate across the membrane. The chain is Tungstate uptake system permease protein TupB from Peptoclostridium acidaminophilum (Eubacterium acidaminophilum).